Consider the following 285-residue polypeptide: Putative quercetin 2,3-dioxygenase PA3240 (285 aa).

A divalent metal cation is bound by residues H60, H62, H104, and E106.

Belongs to the pirin family. The cofactor is a divalent metal cation.

The enzyme catalyses quercetin + O2 = 2-(3,4-dihydroxybenzoyloxy)-4,6-dihydroxybenzoate + CO. It participates in flavonoid metabolism; quercetin degradation. In terms of biological role, putative quercetin 2,3-dioxygenase. The sequence is that of Putative quercetin 2,3-dioxygenase PA3240 from Pseudomonas aeruginosa (strain ATCC 15692 / DSM 22644 / CIP 104116 / JCM 14847 / LMG 12228 / 1C / PRS 101 / PAO1).